Reading from the N-terminus, the 254-residue chain is NH(3)-dependent NAD(+) synthetase (254 aa).

Residue 29–36 coordinates ATP; that stretch reads GLSGGIDS. Asp35 lines the Mg(2+) pocket. Arg115 is a deamido-NAD(+) binding site. Position 135 (Thr135) interacts with ATP. Glu140 contacts Mg(2+). Deamido-NAD(+) is bound by residues Lys148 and Asp155. 2 residues coordinate ATP: Lys164 and Ser186. A deamido-NAD(+)-binding site is contributed by 245–246; sequence HK.

It belongs to the NAD synthetase family. Homodimer.

The catalysed reaction is deamido-NAD(+) + NH4(+) + ATP = AMP + diphosphate + NAD(+) + H(+). It functions in the pathway cofactor biosynthesis; NAD(+) biosynthesis; NAD(+) from deamido-NAD(+) (ammonia route): step 1/1. Its function is as follows. Catalyzes the ATP-dependent amidation of deamido-NAD to form NAD. Uses ammonia as a nitrogen source. The chain is NH(3)-dependent NAD(+) synthetase from Methanococcus aeolicus (strain ATCC BAA-1280 / DSM 17508 / OCM 812 / Nankai-3).